A 257-amino-acid polypeptide reads, in one-letter code: UPF0246 protein YaaA (257 aa).

It belongs to the UPF0246 family.

This Salmonella arizonae (strain ATCC BAA-731 / CDC346-86 / RSK2980) protein is UPF0246 protein YaaA.